An 882-amino-acid chain; its full sequence is MGMAMRCVLVLFSVSPVLLLFNFEMLEVALHLASREKELDTAAVTPSASLSFLSRFRIMLGMNHHRSRGRRHKRYSEAPAPAPAPVPAHQARSEAPAPLVHVPRKGMPSTHRSHIAPARSPVHKVKDGGHTKIPRSAIVALGVVGLCLVVLGVVIAAFSVRRSRKFKKVCTKAFKPFRHGSRDQRSPAATRKVSSHPSPDPLTLSSIVQYQQNLPNLKQSSESKSLSIQSTIPMGTELIVSDHAVINNSQSDEVESFHSIPCSDLSAGSITELPQQICDRRAIMNRSEYFLQTHDSPSDSSYQSLSPDCTSRLSPKDQTFTASSHLSLRSKTCPEKSDGENAEINCHDGLEITCISGSMEHQEAPIEERARINFRNPPSQHIFPPSYRTDTSQSKINIAFTMTNSKVESSSKESSRIETSSSMGIPKPAPPPPPQKNPPPNLKGQCYGQPPPPPPLPLQIQVGKDGSPLPRLKPLHWDKVRAAPNRSMVWNDIRSSSFEFEFDEQMIKSLFAYNLQGSMKDEEAMNKTASTTKHVIEHHRLQNTTILLKTLNANTSQVCNSVIQGNGLSVQQLEALVKMKPTKEEEEKLLNYDGDINMLDPAENFVKVLLTIPMAFPRMEVMLYKENFDDEVAHIKMSFAMIEGACTELKSSKLFLRLLEAVLKTGNRMNVGTLRGGASAFKLDALLKLADIRGTDGKTTLLHFVVKEMARSKGLKALEKLNETPSSCHDTPTEREEYSSMGTEFVSELSNELGNVKKVASIDLDTLRNSISNLSCGLAQLRNLVEKDLASDDKNNNFLQCMKSFLNHAENTMQGLKADEAQVLLNVRELTEYYHGEVSKDESNLLQIFIIVKDFLGLLDKVCREMRGTKHNQTLNLVLPLK.

The signal sequence occupies residues Met1 to Leu19. The segment at Ser67 to Arg92 is disordered. A helical membrane pass occupies residues Ile138–Phe158. Disordered regions lie at residues Arg178–Leu202, Thr293–Lys316, and Thr401–Arg471. Residues Ser298–Asp308 show a composition bias toward low complexity. Positions Lys427–Asn441 are enriched in pro residues. The 421-residue stretch at Val462–Lys882 folds into the FH2 domain.

Belongs to the formin-like family. Class-I subfamily.

Its subcellular location is the membrane. The protein is Formin-like protein 9 (FH9) of Oryza sativa subsp. japonica (Rice).